We begin with the raw amino-acid sequence, 565 residues long: MFANALMLLGLLILLLLILAPLLGSLLSRLIDGEPYRAMARTENTLWRLCGVTPHEMDWRHYLLAILAFNLLGIVLLFALLMAQGLLPLNPQGFPGLRWDLALNTAVSFVTNTNWQAYSGESSLSYLSQMAGLGVQNFLSAASGIAVLFALIRAFARHADPSLGNAWVDLWRITLYVLLPLSLLLSLLFVSQGVIQNVSGYVSVTSLEGGSQLLPMGPVASQEAIKLLGTNGGGFFGANSAHPFENPTALSNLLQMVAIFLLPTALCFAFGRSVGDSRQGHALLWTMSLIFIVAAGCVMYAELQGNPHLMALGTDSNGNMEGKENRFGILASALYAVVTTAASCGAVNAMHDSFTALGGMVPMWLMQIGEVVFGGAGSGLYGMLLFVLLTVFIAGLMIGRTPEYLGKKITVFEVKMTALAILIPPALVLTGSAIALLCDAGRSAIHNPGAHGFSEVLYAFSSAANNNGSAFGGLSVNTPFYNLLLALVMLIGRFGVIIPVMAIAGALALKKRQPAGNGTLASHGALFVSLLIGTILLVGALTFIPALALGPVAEQLQNTRAHIQP.

Helical transmembrane passes span 6-26 (LMLL…LGSL), 63-83 (LLAI…LLMA), 132-152 (GLGV…FALI), 175-195 (LYVL…QGVI), 250-270 (LSNL…CFAF), 283-303 (LLWT…YAEL), 327-347 (FGIL…CGAV), 354-374 (FTAL…VVFG), 379-399 (GLYG…LMIG), 418-438 (ALAI…ALLC), 483-503 (LLLA…VMAI), and 524-544 (GALF…LTFI).

The protein belongs to the KdpA family. As to quaternary structure, the system is composed of three essential subunits: KdpA, KdpB and KdpC.

Its subcellular location is the cell inner membrane. Functionally, part of the high-affinity ATP-driven potassium transport (or Kdp) system, which catalyzes the hydrolysis of ATP coupled with the electrogenic transport of potassium into the cytoplasm. This subunit binds the periplasmic potassium ions and delivers the ions to the membrane domain of KdpB through an intramembrane tunnel. The polypeptide is Potassium-transporting ATPase potassium-binding subunit (Edwardsiella ictaluri (strain 93-146)).